A 299-amino-acid polypeptide reads, in one-letter code: 33 kDa chaperonin (299 aa).

2 disulfides stabilise this stretch: Cys240–Cys242 and Cys273–Cys276.

The protein belongs to the HSP33 family. Post-translationally, under oxidizing conditions two disulfide bonds are formed involving the reactive cysteines. Under reducing conditions zinc is bound to the reactive cysteines and the protein is inactive.

The protein localises to the cytoplasm. Functionally, redox regulated molecular chaperone. Protects both thermally unfolding and oxidatively damaged proteins from irreversible aggregation. Plays an important role in the bacterial defense system toward oxidative stress. This Thermosynechococcus vestitus (strain NIES-2133 / IAM M-273 / BP-1) protein is 33 kDa chaperonin.